A 532-amino-acid polypeptide reads, in one-letter code: Developmental and secondary metabolism regulator ve1 (532 aa).

The Velvet domain maps to 26–220 (NRSLWYQLTV…ADQGCRVRIR (195 aa)). Positions 40–45 (ERARAC) match the Nuclear localization signal motif. Over residues 217–229 (VRIRRDVRMRKRD) the composition is skewed to basic residues. 2 disordered regions span residues 217–440 (VRIR…TEPS) and 458–520 (PQVD…RADG). Positions 233–250 (GGNNNNNNNAGNNAGNNG) are enriched in low complexity. Basic and acidic residues-rich tracts occupy residues 251-260 (FERREEDFGR) and 283-294 (SEHRASYSDVSR). Residues 302 to 317 (YPPPPPPPPSYDPTPS) show a composition bias toward pro residues. A compositionally biased stretch (low complexity) spans 397 to 411 (STSTYVPPSPSVYST). Residues 435–463 (MNTEPSRGSIKISALVEPMPVIEPQVDPL) are PEST. The span at 481–493 (FAQNTRPLFNGQR) shows a compositional bias: polar residues.

The protein belongs to the velvet family. VeA subfamily. As to quaternary structure, component of the heterotrimeric velvet complex composed of laeA, ve1 and velB; Ve1 acting as a bridging protein between laeA and velB. Interacts directly with laeA and velB.

The protein localises to the nucleus. Its subcellular location is the cytoplasm. Component of the velvet transcription factor complex that controls sexual/asexual developmental ratio in response to light, promoting sexual development in the darkness while stimulating asexual sporulation under illumination. The velvet complex hat acts as a global regulator for secondary metabolite gene expression. Controls the expression of the aurofusarin and trichothecene gene clusters. Also controls the expression of the deoxynivalenol (DON) gene cluster. Regulates hyphal growth and pigment formation. Acts as a positive regulator of virulence. The sequence is that of Developmental and secondary metabolism regulator ve1 from Gibberella zeae (strain ATCC MYA-4620 / CBS 123657 / FGSC 9075 / NRRL 31084 / PH-1) (Wheat head blight fungus).